Here is a 470-residue protein sequence, read N- to C-terminus: Dynein axonemal assembly factor 11 (470 aa).

4 LRR repeats span residues 20 to 43, 44 to 65, 66 to 89, and 90 to 110; these read IFSL…DKWC, RELK…VSKL, KKLE…GCES, and LQKL…NSLQ. Positions 128–146 constitute an LRRCT domain; that stretch reads YEGYRQYVVATLPQLKWLD. Positions 177–288 form a coiled coil; that stretch reads LRKRAAEREK…NRSEEELKKK (112 aa). Positions 182 to 265 are disordered; the sequence is AEREKATNNL…SQYTPESRLE (84 aa). The segment covering 194–213 has biased composition (basic and acidic residues); that stretch reads KQKEGRKAQEKKPGFDRRWY. The CS domain maps to 303-395; sequence VNESKLDFSL…TEMIQTKRAK (93 aa). Positions 447–470 are disordered; sequence HRNSARDTADSEDFIDNAEVPPLV.

The protein belongs to the tilB family.

The protein localises to the cytoplasm. It localises to the cell projection. The protein resides in the cilium. It is found in the dynein axonemal particle. Its subcellular location is the flagellum. In terms of biological role, involved in dynein arm assembly, is important for expression and transporting outer dynein arm (ODA) proteins from the cytoplasm to the cilia. This chain is Dynein axonemal assembly factor 11 (dnaaf11), found in Xenopus tropicalis (Western clawed frog).